The chain runs to 488 residues: UDP-N-acetylmuramate--L-alanine ligase (488 aa).

122-128 (GTHGKTT) contributes to the ATP binding site.

Belongs to the MurCDEF family.

Its subcellular location is the cytoplasm. The enzyme catalyses UDP-N-acetyl-alpha-D-muramate + L-alanine + ATP = UDP-N-acetyl-alpha-D-muramoyl-L-alanine + ADP + phosphate + H(+). It functions in the pathway cell wall biogenesis; peptidoglycan biosynthesis. Functionally, cell wall formation. This is UDP-N-acetylmuramate--L-alanine ligase from Mycobacterium ulcerans (strain Agy99).